We begin with the raw amino-acid sequence, 480 residues long: Glutathione reductase (480 aa).

Residues S31 and G32 each contribute to the FAD site. Residue S31 coordinates glutathione. R38 provides a ligand contact to glutathione. Residues E51, T58, C59, and K67 each coordinate FAD. C59 and C64 are oxidised to a cystine. Y121 provides a ligand contact to glutathione. Residue A137 coordinates FAD. NADP(+)-binding residues include I206, E209, R226, and G291. D331 lines the FAD pocket. Residue E337 coordinates NADP(+). Residue T339 participates in FAD binding. R347 contacts glutathione. V372 provides a ligand contact to NADP(+). Residue K422 participates in glutathione binding. Position 469 (H469) interacts with FAD. Catalysis depends on H469, which acts as the Proton acceptor.

It belongs to the class-I pyridine nucleotide-disulfide oxidoreductase family. As to quaternary structure, homodimer. Requires FAD as cofactor.

It is found in the cytoplasm. The protein localises to the mitochondrion. The catalysed reaction is 2 glutathione + NADP(+) = glutathione disulfide + NADPH + H(+). Its function is as follows. Catalyzes the reduction of glutathione disulfide (GSSG) to reduced glutathione (GSH). Constitutes the major mechanism to maintain a high GSH:GSSG ratio in the cytosol. This is Glutathione reductase (GLR1) from Eremothecium gossypii (strain ATCC 10895 / CBS 109.51 / FGSC 9923 / NRRL Y-1056) (Yeast).